The chain runs to 421 residues: ATP-dependent RNA helicase RhlB (421 aa).

Residues 9-37 (QKFSDFALHPKVVEVLEKKGFHNCTPIQA) carry the Q motif motif. The Helicase ATP-binding domain occupies 40–219 (LPLTLAGRDV…FEQMNNAEYI (180 aa)). 53 to 60 (AQTGTGKT) provides a ligand contact to ATP. The short motif at 165–168 (DEAD) is the DEAD box element. One can recognise a Helicase C-terminal domain in the interval 245 to 390 (RLLQTLIEEE…VSKYNPDALM (146 aa)). A disordered region spans residues 392–421 (DLPKPLRLTRPRTGNGPRRTGAPRNRRRSG). The span at 402 to 414 (PRTGNGPRRTGAP) shows a compositional bias: low complexity.

It belongs to the DEAD box helicase family. RhlB subfamily. In terms of assembly, component of the RNA degradosome, which is a multiprotein complex involved in RNA processing and mRNA degradation.

Its subcellular location is the cytoplasm. The catalysed reaction is ATP + H2O = ADP + phosphate + H(+). DEAD-box RNA helicase involved in RNA degradation. Has RNA-dependent ATPase activity and unwinds double-stranded RNA. The protein is ATP-dependent RNA helicase RhlB of Shigella boydii serotype 18 (strain CDC 3083-94 / BS512).